A 249-amino-acid polypeptide reads, in one-letter code: 23S rRNA (guanosine-2'-O-)-methyltransferase RlmB (249 aa).

Gly-200, Ile-220, and Leu-229 together coordinate S-adenosyl-L-methionine.

It belongs to the class IV-like SAM-binding methyltransferase superfamily. RNA methyltransferase TrmH family. RlmB subfamily.

Its subcellular location is the cytoplasm. It catalyses the reaction guanosine(2251) in 23S rRNA + S-adenosyl-L-methionine = 2'-O-methylguanosine(2251) in 23S rRNA + S-adenosyl-L-homocysteine + H(+). Its function is as follows. Specifically methylates the ribose of guanosine 2251 in 23S rRNA. This is 23S rRNA (guanosine-2'-O-)-methyltransferase RlmB from Xanthomonas campestris pv. campestris (strain ATCC 33913 / DSM 3586 / NCPPB 528 / LMG 568 / P 25).